Consider the following 220-residue polypeptide: Phosphoenolpyruvate guanylyltransferase (220 aa).

Phosphoenolpyruvate contacts are provided by Thr154, Gly169, and Ser172.

It belongs to the CofC family.

The catalysed reaction is phosphoenolpyruvate + GTP + H(+) = enolpyruvoyl-2-diphospho-5'-guanosine + diphosphate. Its pathway is cofactor biosynthesis; coenzyme F420 biosynthesis. Guanylyltransferase that catalyzes the activation of phosphoenolpyruvate (PEP) as enolpyruvoyl-2-diphospho-5'-guanosine, via the condensation of PEP with GTP. It is involved in the biosynthesis of coenzyme F420, a hydride carrier cofactor. This Mycolicibacterium paratuberculosis (strain ATCC BAA-968 / K-10) (Mycobacterium paratuberculosis) protein is Phosphoenolpyruvate guanylyltransferase.